A 1166-amino-acid polypeptide reads, in one-letter code: Serine-aspartate repeat-containing protein E (1166 aa).

An N-terminal signal peptide occupies residues 1–52 (MINRDNKKAITKKGMISNRLNKFSIRKYTVGTASILVGTTLIFGLGNQEAKA). The YSIRK-G/S signaling motif motif lies at 23–34 (FSIRKYTVGTAS). Positions 53 to 606 (AENTSTENAK…GDGTVKPEEK (554 aa)) are ligand binding A region. The segment at 54–230 (ENTSTENAKQ…SKEELKNNPE (177 aa)) is disordered. A compositionally biased stretch (basic and acidic residues) spans 61 to 75 (AKQDDATTSDNKEVV). Residues 77-90 (ETENNSTTENNSTN) show a composition bias toward low complexity. Over residues 92–108 (IKKETNTDSQPEAKKES) the composition is skewed to basic and acidic residues. The span at 118 to 129 (NNVTATTETKPQ) shows a compositional bias: polar residues. Positions 130–145 (NIEKENVKPSTDKTAT) are enriched in basic and acidic residues. A compositionally biased stretch (low complexity) spans 166 to 178 (TTKPSTSEPSTSE). A compositionally biased stretch (polar residues) spans 179–212 (IQTKPTTPQESTNIENSQPQPTPSKVDNQVTDAT). The span at 221–230 (SKEELKNNPE) shows a compositional bias: basic and acidic residues. 3 consecutive CNA-B domains span residues 607–719 (LYKI…YKEP), 720–829 (KYNL…YKTP), and 830–940 (KYSL…EEDT). Residues 904–1141 (VTNTTEDDKD…TGSENNGSNN (238 aa)) form a disordered region. Composition is skewed to acidic residues over residues 908–918 (TEDDKDADGGE) and 935–1105 (YFEE…DSDS). Positions 1129–1133 (LPETG) match the LPXTG sorting signal motif. The residue at position 1132 (Thr1132) is a Pentaglycyl murein peptidoglycan amidated threonine. The propeptide at 1133-1166 (GSENNGSNNATLFGGLFAALGSLLLFGRRKKQNK) is removed by sortase.

This sequence belongs to the serine-aspartate repeat-containing protein (SDr) family. As to quaternary structure, interacts with host complement factor H/CFAH (via C-terminus). Interacts with host complement regulator C4BPA.

The protein resides in the secreted. The protein localises to the cell wall. Functionally, cell surface-associated calcium-binding protein which plays an important role in adhesion and pathogenesis. Contributes to the resistance to killing by innate immune components in blood and thus attenuates bacterial clearance by interacting with host complement factor H/CFAH and modulating its activity. Inhibits also bacterial opsonization and killing by interacting with host complement regulator C4BPA and thus inhibiting classical complement pathway activation. The chain is Serine-aspartate repeat-containing protein E (sdrE) from Staphylococcus aureus (strain Newman).